The following is a 133-amino-acid chain: Small ribosomal subunit protein bS18 (133 aa).

Positions 1–63 are disordered; it reads MARPDMGGPK…GDEGGGRRGF (63 aa). The segment covering 9-39 has biased composition (gly residues); that stretch reads PKTGGFGGPRSGGFGGGGGGGFGGGGFGGGR. Residues 40-59 show a composition bias toward basic and acidic residues; it reads GGDRGDRGDRDDRGGDEGGG.

It belongs to the bacterial ribosomal protein bS18 family. In terms of assembly, part of the 30S ribosomal subunit. Forms a tight heterodimer with protein bS6.

Functionally, binds as a heterodimer with protein bS6 to the central domain of the 16S rRNA, where it helps stabilize the platform of the 30S subunit. The sequence is that of Small ribosomal subunit protein bS18 from Anaeromyxobacter dehalogenans (strain 2CP-1 / ATCC BAA-258).